Here is a 166-residue protein sequence, read N- to C-terminus: MIFKGKAHKYYDNIDTDVIIPARYLNTSDPNELAKHCLEDLDKEFVNKVQKGDILVAGKNFGCGSSREHAPIAIKACGVSCVIAKSFARIFYRNAINIGLPIVECEEAVDGIEAGDEVEVDLVNGIIKNLTKGKEFKAKPFPEFMQNIMKAGGLIEFVKGELKKDA.

This sequence belongs to the LeuD family. LeuD type 2 subfamily. Heterodimer of LeuC and LeuD.

The catalysed reaction is (2R,3S)-3-isopropylmalate = (2S)-2-isopropylmalate. The protein operates within amino-acid biosynthesis; L-leucine biosynthesis; L-leucine from 3-methyl-2-oxobutanoate: step 2/4. Catalyzes the isomerization between 2-isopropylmalate and 3-isopropylmalate, via the formation of 2-isopropylmaleate. This Caldicellulosiruptor bescii (strain ATCC BAA-1888 / DSM 6725 / KCTC 15123 / Z-1320) (Anaerocellum thermophilum) protein is 3-isopropylmalate dehydratase small subunit.